A 404-amino-acid chain; its full sequence is Phosphopentomutase (404 aa).

6 residues coordinate Mn(2+): D10, D303, H308, D344, H345, and H356.

This sequence belongs to the phosphopentomutase family. Requires Mn(2+) as cofactor.

The protein resides in the cytoplasm. The catalysed reaction is 2-deoxy-alpha-D-ribose 1-phosphate = 2-deoxy-D-ribose 5-phosphate. It carries out the reaction alpha-D-ribose 1-phosphate = D-ribose 5-phosphate. It functions in the pathway carbohydrate degradation; 2-deoxy-D-ribose 1-phosphate degradation; D-glyceraldehyde 3-phosphate and acetaldehyde from 2-deoxy-alpha-D-ribose 1-phosphate: step 1/2. In terms of biological role, isomerase that catalyzes the conversion of deoxy-ribose 1-phosphate (dRib-1-P) and ribose 1-phosphate (Rib-1-P) to deoxy-ribose 5-phosphate (dRib-5-P) and ribose 5-phosphate (Rib-5-P), respectively. The polypeptide is Phosphopentomutase (Shewanella sp. (strain ANA-3)).